The chain runs to 59 residues: Large ribosomal subunit protein uL30 (59 aa).

This sequence belongs to the universal ribosomal protein uL30 family. In terms of assembly, part of the 50S ribosomal subunit.

This is Large ribosomal subunit protein uL30 from Acetivibrio thermocellus (strain ATCC 27405 / DSM 1237 / JCM 9322 / NBRC 103400 / NCIMB 10682 / NRRL B-4536 / VPI 7372) (Clostridium thermocellum).